A 282-amino-acid polypeptide reads, in one-letter code: Undecaprenyl-diphosphatase (282 aa).

The next 7 helical transmembrane spans lie at 40–60 (GAAF…IYFM), 89–109 (WMIA…KDDI), 113–133 (LRSL…LSIA), 150–170 (ISEI…MALI), 196–216 (FSFL…LYKT), 230–250 (IAVA…FLLT), and 258–278 (GIFI…IGTG).

The protein belongs to the UppP family.

It is found in the cell inner membrane. It catalyses the reaction di-trans,octa-cis-undecaprenyl diphosphate + H2O = di-trans,octa-cis-undecaprenyl phosphate + phosphate + H(+). Catalyzes the dephosphorylation of undecaprenyl diphosphate (UPP). Confers resistance to bacitracin. The sequence is that of Undecaprenyl-diphosphatase from Chlorobaculum parvum (strain DSM 263 / NCIMB 8327) (Chlorobium vibrioforme subsp. thiosulfatophilum).